A 338-amino-acid polypeptide reads, in one-letter code: Fructose-1,6-bisphosphatase class 1 (338 aa).

4 residues coordinate Mg(2+): Glu90, Asp112, Leu114, and Asp115. Residues 115 to 118 (DGSS), Asn207, and Lys273 contribute to the substrate site. Glu279 serves as a coordination point for Mg(2+).

It belongs to the FBPase class 1 family. As to quaternary structure, homotetramer. Mg(2+) serves as cofactor.

Its subcellular location is the cytoplasm. The catalysed reaction is beta-D-fructose 1,6-bisphosphate + H2O = beta-D-fructose 6-phosphate + phosphate. Its pathway is carbohydrate biosynthesis; gluconeogenesis. This chain is Fructose-1,6-bisphosphatase class 1, found in Stenotrophomonas maltophilia (strain K279a).